A 177-amino-acid chain; its full sequence is Peptide deformylase 2 (177 aa).

Fe cation is bound by residues C99 and H141. E142 is a catalytic residue. H145 contacts Fe cation.

The protein belongs to the polypeptide deformylase family. Requires Fe(2+) as cofactor.

It catalyses the reaction N-terminal N-formyl-L-methionyl-[peptide] + H2O = N-terminal L-methionyl-[peptide] + formate. In terms of biological role, removes the formyl group from the N-terminal Met of newly synthesized proteins. Requires at least a dipeptide for an efficient rate of reaction. N-terminal L-methionine is a prerequisite for activity but the enzyme has broad specificity at other positions. The polypeptide is Peptide deformylase 2 (Ralstonia nicotianae (strain ATCC BAA-1114 / GMI1000) (Ralstonia solanacearum)).